The primary structure comprises 518 residues: ATP synthase subunit alpha (518 aa).

169–176 contributes to the ATP binding site; sequence GDRKTGKT.

Belongs to the ATPase alpha/beta chains family. In terms of assembly, F-type ATPases have 2 components, CF(1) - the catalytic core - and CF(0) - the membrane proton channel. CF(1) has five subunits: alpha(3), beta(3), gamma(1), delta(1), epsilon(1). CF(0) has three main subunits: a(1), b(2) and c(9-12). The alpha and beta chains form an alternating ring which encloses part of the gamma chain. CF(1) is attached to CF(0) by a central stalk formed by the gamma and epsilon chains, while a peripheral stalk is formed by the delta and b chains.

It localises to the cell membrane. It carries out the reaction ATP + H2O + 4 H(+)(in) = ADP + phosphate + 5 H(+)(out). In terms of biological role, produces ATP from ADP in the presence of a proton gradient across the membrane. The alpha chain is a regulatory subunit. The sequence is that of ATP synthase subunit alpha from Enterococcus hirae (strain ATCC 9790 / DSM 20160 / JCM 8729 / LMG 6399 / NBRC 3181 / NCIMB 6459 / NCDO 1258 / NCTC 12367 / WDCM 00089 / R).